The primary structure comprises 101 residues: Acylphosphatase (101 aa).

One can recognise an Acylphosphatase-like domain in the interval Arg-12–Arg-98. Residues Arg-27 and Asn-45 contribute to the active site.

Belongs to the acylphosphatase family.

It carries out the reaction an acyl phosphate + H2O = a carboxylate + phosphate + H(+). The sequence is that of Acylphosphatase (acyP) from Trichormus variabilis (strain ATCC 29413 / PCC 7937) (Anabaena variabilis).